The sequence spans 120 residues: Large ribosomal subunit protein eL34 (120 aa).

This sequence belongs to the eukaryotic ribosomal protein eL34 family.

The polypeptide is Large ribosomal subunit protein eL34 (RPL34) (Pisum sativum (Garden pea)).